The sequence spans 212 residues: Holliday junction branch migration complex subunit RuvA (212 aa).

Residues 1–70 (MISYLKGSPI…EDQQILYGFS (70 aa)) are domain I. The segment at 71–149 (TTAERELFRQ…QWRKMVGVTV (79 aa)) is domain II. Residues 150-160 (TSSAAMPSLEI) form a flexible linker region. Residues 160–212 (ILEDIEMTLLALGYTNEEINKAISTLSQDNLMLKNTNTEEWIKEAIAWLSQGT) are domain III.

It belongs to the RuvA family. Homotetramer. Forms an RuvA(8)-RuvB(12)-Holliday junction (HJ) complex. HJ DNA is sandwiched between 2 RuvA tetramers; dsDNA enters through RuvA and exits via RuvB. An RuvB hexamer assembles on each DNA strand where it exits the tetramer. Each RuvB hexamer is contacted by two RuvA subunits (via domain III) on 2 adjacent RuvB subunits; this complex drives branch migration. In the full resolvosome a probable DNA-RuvA(4)-RuvB(12)-RuvC(2) complex forms which resolves the HJ.

Its subcellular location is the cytoplasm. Functionally, the RuvA-RuvB-RuvC complex processes Holliday junction (HJ) DNA during genetic recombination and DNA repair, while the RuvA-RuvB complex plays an important role in the rescue of blocked DNA replication forks via replication fork reversal (RFR). RuvA specifically binds to HJ cruciform DNA, conferring on it an open structure. The RuvB hexamer acts as an ATP-dependent pump, pulling dsDNA into and through the RuvAB complex. HJ branch migration allows RuvC to scan DNA until it finds its consensus sequence, where it cleaves and resolves the cruciform DNA. This is Holliday junction branch migration complex subunit RuvA from Crocosphaera subtropica (strain ATCC 51142 / BH68) (Cyanothece sp. (strain ATCC 51142)).